A 328-amino-acid polypeptide reads, in one-letter code: Tetraacyldisaccharide 4'-kinase (328 aa).

55–62 (TAGGNGKT) contributes to the ATP binding site.

This sequence belongs to the LpxK family.

The catalysed reaction is a lipid A disaccharide + ATP = a lipid IVA + ADP + H(+). The protein operates within glycolipid biosynthesis; lipid IV(A) biosynthesis; lipid IV(A) from (3R)-3-hydroxytetradecanoyl-[acyl-carrier-protein] and UDP-N-acetyl-alpha-D-glucosamine: step 6/6. Its function is as follows. Transfers the gamma-phosphate of ATP to the 4'-position of a tetraacyldisaccharide 1-phosphate intermediate (termed DS-1-P) to form tetraacyldisaccharide 1,4'-bis-phosphate (lipid IVA). This chain is Tetraacyldisaccharide 4'-kinase, found in Escherichia coli (strain K12 / MC4100 / BW2952).